The following is a 123-amino-acid chain: uncharacterized protein (123 aa).

The helical transmembrane segment at 1–21 threads the bilayer; that stretch reads MHIIAKSILLMAVSFLVIIFT.

It is found in the membrane. This is an uncharacterized protein from Methanocaldococcus jannaschii (strain ATCC 43067 / DSM 2661 / JAL-1 / JCM 10045 / NBRC 100440) (Methanococcus jannaschii).